Here is a 275-residue protein sequence, read N- to C-terminus: tRNA-splicing endonuclease subunit SEN34 (275 aa).

Catalysis depends on residues Tyr-209, His-217, and Lys-250.

It belongs to the tRNA-intron endonuclease family. As to quaternary structure, heterotetramer composed of SEN2, SEN15, SEN34 and SEN54. Interacts directly with SEN15.

The protein resides in the nucleus. Its subcellular location is the endomembrane system. It localises to the mitochondrion outer membrane. The enzyme catalyses pretRNA = a 3'-half-tRNA molecule with a 5'-OH end + a 5'-half-tRNA molecule with a 2',3'-cyclic phosphate end + an intron with a 2',3'-cyclic phosphate and a 5'-hydroxyl terminus.. Constitutes one of the two catalytic subunit of the tRNA-splicing endonuclease complex, a complex responsible for identification and cleavage of the splice sites in pre-tRNA. It cleaves pre-tRNA at the 5'- and 3'-splice sites to release the intron. The products are an intron and two tRNA half-molecules bearing 2',3'-cyclic phosphate and 5'-OH termini. There are no conserved sequences at the splice sites, but the intron is invariably located at the same site in the gene, placing the splice sites an invariant distance from the constant structural features of the tRNA body. It probably carries the active site for 3'-splice site cleavage. The sequence is that of tRNA-splicing endonuclease subunit SEN34 (SEN34) from Saccharomyces cerevisiae (strain ATCC 204508 / S288c) (Baker's yeast).